We begin with the raw amino-acid sequence, 374 residues long: Lipoyl synthase, mitochondrial (374 aa).

[4Fe-4S] cluster contacts are provided by cysteine 101, cysteine 106, cysteine 112, cysteine 132, cysteine 136, cysteine 139, and serine 347. The Radical SAM core domain maps to 117-336 (ENGTQTATIM…EERGNDLGFL (220 aa)).

It belongs to the radical SAM superfamily. Lipoyl synthase family. The cofactor is [4Fe-4S] cluster.

The protein localises to the mitochondrion. It carries out the reaction [[Fe-S] cluster scaffold protein carrying a second [4Fe-4S](2+) cluster] + N(6)-octanoyl-L-lysyl-[protein] + 2 oxidized [2Fe-2S]-[ferredoxin] + 2 S-adenosyl-L-methionine + 4 H(+) = [[Fe-S] cluster scaffold protein] + N(6)-[(R)-dihydrolipoyl]-L-lysyl-[protein] + 4 Fe(3+) + 2 hydrogen sulfide + 2 5'-deoxyadenosine + 2 L-methionine + 2 reduced [2Fe-2S]-[ferredoxin]. The protein operates within protein modification; protein lipoylation via endogenous pathway; protein N(6)-(lipoyl)lysine from octanoyl-[acyl-carrier-protein]: step 2/2. Its function is as follows. Catalyzes the radical-mediated insertion of two sulfur atoms into the C-6 and C-8 positions of the octanoyl moiety bound to the lipoyl domains of lipoate-dependent enzymes, thereby converting the octanoylated domains into lipoylated derivatives. The sequence is that of Lipoyl synthase, mitochondrial from Drosophila pseudoobscura pseudoobscura (Fruit fly).